A 78-amino-acid chain; its full sequence is Large ribosomal subunit protein uL10 (78 aa).

Low complexity predominate over residues 40–50; that stretch reads AAAAAATAPAA. Residues 40–78 are disordered; the sequence is AAAAAATAPAAETKKEEKKEEKKEETEESDDDIGLSLFH. Residues 51 to 64 are compositionally biased toward basic and acidic residues; sequence ETKKEEKKEEKKEE.

It belongs to the universal ribosomal protein uL10 family. In terms of assembly, P0 forms a pentameric complex by interaction with dimers of P1 and P2.

Its subcellular location is the nucleus. It is found in the cytoplasm. Ribosomal protein P0 is the functional equivalent of E.coli protein L10. This chain is Large ribosomal subunit protein uL10, found in Culicoides nubeculosus (Biting midge).